A 350-amino-acid polypeptide reads, in one-letter code: Alcohol dehydrogenase 1 (350 aa).

Residues Cys-44, Thr-46, His-67, Cys-98, Cys-101, Cys-104, Cys-112, and Cys-154 each coordinate Zn(2+). Thr-46 and His-67 together coordinate an alcohol. NAD(+) is bound at residue Thr-46. NAD(+)-binding positions include 178–182, Asp-202, Lys-207, 271–273, and Arg-343; these read GAGGG and IGL.

Belongs to the zinc-containing alcohol dehydrogenase family. In terms of assembly, homotetramer. It depends on Zn(2+) as a cofactor.

The protein resides in the cytoplasm. Its subcellular location is the secreted. The enzyme catalyses a primary alcohol + NAD(+) = an aldehyde + NADH + H(+). It carries out the reaction a secondary alcohol + NAD(+) = a ketone + NADH + H(+). In Emericella nidulans (strain FGSC A4 / ATCC 38163 / CBS 112.46 / NRRL 194 / M139) (Aspergillus nidulans), this protein is Alcohol dehydrogenase 1 (alcA).